A 353-amino-acid polypeptide reads, in one-letter code: B1 bradykinin receptor (353 aa).

The Extracellular portion of the chain corresponds to 1–41 (MASQTLVVFQASNQSQLPPPNATLCDGAQEAWHLLHKVLPT). 2 N-linked (GlcNAc...) asparagine glycosylation sites follow: N13 and N21. Residues 42–62 (CVVAICSGGLLGNLFVLSVFL) form a helical membrane-spanning segment. Topologically, residues 63-72 (VPRRRLNAAE) are cytoplasmic. The helical transmembrane segment at 73–93 (IYLAHLAASDLVFALGLPFWA) threads the bilayer. Residues 94–110 (ETIRNGFHWPFGAPLCR) are Extracellular-facing. Cysteines 109 and 189 form a disulfide. Residues 111-131 (VVNGVIKANLFISIFLVVAIS) form a helical membrane-spanning segment. Over 132-154 (RDRYRALVHPVASWRRRRRRHWA) the chain is Cytoplasmic. A helical membrane pass occupies residues 155 to 175 (QATCVLIWTAGGLLSIPTFLL). Topologically, residues 176–207 (RSVQVVPELNVSACVLPFPHEAWAFVRTVELN) are extracellular. N-linked (GlcNAc...) asparagine glycosylation occurs at N185. Residues 208 to 228 (VLGFLLPLAAILFFNYHILAA) form a helical membrane-spanning segment. At 229–251 (LRGREQLSRTRCGGPRDGKTTAL) the chain is on the cytoplasmic side. Residues 252–272 (ILTLVAVFLLCWTPYHVCAFL) form a helical membrane-spanning segment. Residues 273–295 (EFLLHVRAIRGCFWEDFTDLGLQ) are Extracellular-facing. A helical membrane pass occupies residues 296–316 (YTNFFAFINSCLNPVIYVFWG). Topologically, residues 317 to 353 (QLFRTKIWELYHRCLPRKLTAVSSSRRKEIFQIFWRN) are cytoplasmic. The S-palmitoyl cysteine moiety is linked to residue C330.

It belongs to the G-protein coupled receptor 1 family. Bradykinin receptor subfamily. BDKRB1 sub-subfamily.

The protein resides in the cell membrane. This is a receptor for bradykinin. Could be a factor in chronic pain and inflammation. The sequence is that of B1 bradykinin receptor (BDKRB1) from Sus scrofa (Pig).